A 138-amino-acid polypeptide reads, in one-letter code: MRTLWIVAVWLIGVEGSVIEFGTMIIEETGRSPFPFYTSYGCYCGLGGKGKPKDDTDRCCFVHDCCYGSMPDCSPKTDIYRYHRENGEIICESGTSCEKRICECDKAAAVCFRENLKTYKNKYMVYPDSLCKEESEKC.

The signal sequence occupies residues 1–16 (MRTLWIVAVWLIGVEG). 7 disulfides stabilise this stretch: Cys42-Cys131, Cys44-Cys60, Cys59-Cys111, Cys65-Cys138, Cys66-Cys104, Cys73-Cys97, and Cys91-Cys102. Residues Tyr43, Gly45, and Gly47 each coordinate Ca(2+). His63 is a catalytic residue. Residue Asp64 participates in Ca(2+) binding. The active site involves Asp105.

This sequence belongs to the phospholipase A2 family. Group II subfamily. D49 sub-subfamily. Ca(2+) serves as cofactor. In terms of tissue distribution, expressed by the venom gland.

It is found in the secreted. The catalysed reaction is a 1,2-diacyl-sn-glycero-3-phosphocholine + H2O = a 1-acyl-sn-glycero-3-phosphocholine + a fatty acid + H(+). In terms of biological role, PLA2 catalyzes the calcium-dependent hydrolysis of the 2-acyl groups in 3-sn-phosphoglycerides. In Echis ocellatus (Ocellated saw-scaled viper), this protein is Acidic phospholipase A2 5.